The chain runs to 595 residues: Tyrosine-protein phosphatase cdcA (595 aa).

The interval 32-57 (TPFPYPAEQPKSPSKRRAQASPSKKR) is disordered. Positions 44–57 (PSKRRAQASPSKKR) are enriched in basic residues. The region spanning 233 to 381 (LPSTVSEVRS…QGSFREWWFE (149 aa)) is the Tyrosine-protein phosphatase domain. Cys322 serves as the catalytic Phosphocysteine intermediate. The disordered stretch occupies residues 392–595 (QPNPVTPGRS…GSPVRVKAQA (204 aa)). A compositionally biased stretch (basic residues) spans 449–461 (RKSHRKDSRHHPY). The segment covering 471-483 (VDKDTRKTRRSTD) has biased composition (basic and acidic residues). Over residues 502 to 526 (SKSPAASPGQRSISYSATVTASYTL) the composition is skewed to polar residues.

This sequence belongs to the protein-tyrosine phosphatase family. Non-receptor class CDC14 subfamily.

It is found in the nucleus. Its subcellular location is the cytoplasm. It localises to the cell septum. It carries out the reaction O-phospho-L-tyrosyl-[protein] + H2O = L-tyrosyl-[protein] + phosphate. Functionally, protein phosphatase which antagonizes mitotic cyclin-dependent kinase nimX, the inactivation of which is essential for exit from mitosis. To access its substrates, is released from nucleolar sequestration during mitosis. Plays an essential in coordinating the nuclear division cycle with cytokinesis through the cytokinesis checkpoint. Involved in chromosome segregation, where it is required for meiosis I spindle dissambly as well as for establishing two consecutive chromosome segregation phases. Required for the transcription of the two major endoglucanase genes eglA and eglB and growth on synthetic cellulose as the sole carbon source. The chain is Tyrosine-protein phosphatase cdcA (cdcA) from Emericella nidulans (strain FGSC A4 / ATCC 38163 / CBS 112.46 / NRRL 194 / M139) (Aspergillus nidulans).